We begin with the raw amino-acid sequence, 1025 residues long: AP-2 complex subunit alpha (1025 aa).

Positions 713-737 (RSIMVPMPPPSRRNTIDDVNSKISS) are disordered. Thr727 carries the post-translational modification Phosphothreonine. Position 733 is a phosphoserine (Ser733).

The protein belongs to the adaptor complexes large subunit family. As to quaternary structure, adaptor protein complex 2 (AP-2) is a heterotetramer composed of two large adaptins (alpha-type subunit APL3 and beta-type subunit APL1), a medium chain (mu-type subunit APM4) and a small adaptin (sigma-type subunit APS2).

It localises to the cell membrane. Its subcellular location is the membrane. The protein localises to the coated pit. Functionally, adaptins are components of the adaptor complexes which link clathrin to receptors in coated vesicles. Clathrin-associated protein complexes are believed to interact with the cytoplasmic tails of membrane proteins, leading to their selection and concentration. Alpha adaptin is a subunit of the plasma membrane adaptor. Facilitates interaction between APL1 and APS2. The sequence is that of AP-2 complex subunit alpha (APL3) from Saccharomyces cerevisiae (strain ATCC 204508 / S288c) (Baker's yeast).